A 473-amino-acid chain; its full sequence is Photosystem II CP43 reaction center protein (473 aa).

A propeptide spanning residues 1-14 (MKTLYSLRRFYPVE) is cleaved from the precursor. An N-acetylthreonine modification is found at T15. T15 bears the Phosphothreonine mark. The next 5 helical transmembrane spans lie at 69-93 (LFEV…PHLA), 134-155 (LLGP…KDRN), 178-200 (KALY…RKIT), 255-275 (KPFA…LSYS), and 291-312 (WFNN…ASQA). [CaMn4O5] cluster is bound at residue E367. Residues 447–471 (RARAAAAGFEKGIDRDFEPVLSMTP) form a helical membrane-spanning segment.

Belongs to the PsbB/PsbC family. PsbC subfamily. As to quaternary structure, PSII is composed of 1 copy each of membrane proteins PsbA, PsbB, PsbC, PsbD, PsbE, PsbF, PsbH, PsbI, PsbJ, PsbK, PsbL, PsbM, PsbT, PsbX, PsbY, PsbZ, Psb30/Ycf12, at least 3 peripheral proteins of the oxygen-evolving complex and a large number of cofactors. It forms dimeric complexes. The cofactor is Binds multiple chlorophylls and provides some of the ligands for the Ca-4Mn-5O cluster of the oxygen-evolving complex. It may also provide a ligand for a Cl- that is required for oxygen evolution. PSII binds additional chlorophylls, carotenoids and specific lipids..

Its subcellular location is the plastid. The protein localises to the chloroplast thylakoid membrane. One of the components of the core complex of photosystem II (PSII). It binds chlorophyll and helps catalyze the primary light-induced photochemical processes of PSII. PSII is a light-driven water:plastoquinone oxidoreductase, using light energy to abstract electrons from H(2)O, generating O(2) and a proton gradient subsequently used for ATP formation. The polypeptide is Photosystem II CP43 reaction center protein (Helianthus annuus (Common sunflower)).